The chain runs to 690 residues: Eukaryotic translation initiation factor 3 subunit B (690 aa).

The segment covering 1-11 (MAKKKSEDHSG) has biased composition (basic and acidic residues). Positions 1 to 37 (MAKKKSEDHSGGDANDSDYNEEPNFEDPPNFVDNISD) are disordered. A compositionally biased stretch (acidic residues) spans 15–25 (NDSDYNEEPNF). In terms of domain architecture, RRM spans 57-141 (SVVVVDNIPK…HTFAVNLFTD (85 aa)). WD repeat units lie at residues 207 to 246 (TRER…KIQK), 247 to 289 (FPHT…EKRS), 293 to 331 (DGMS…LLDL), 334 to 369 (IKIP…TLME), 442 to 484 (EIRE…KPSL), and 530 to 575 (PDHF…IKRT). Positions 614–645 (QKDRLRLTRASKELLEKRSQLRETFMEYRNKR) form a coiled coil.

Belongs to the eIF-3 subunit B family. As to quaternary structure, component of the eukaryotic translation initiation factor 3 (eIF-3) complex. The eIF-3 complex interacts with pix. Interacts with mxt.

The protein resides in the cytoplasm. In terms of biological role, RNA-binding component of the eukaryotic translation initiation factor 3 (eIF-3) complex, which is involved in protein synthesis of a specialized repertoire of mRNAs and, together with other initiation factors, stimulates binding of mRNA and methionyl-tRNAi to the 40S ribosome. The eIF-3 complex specifically targets and initiates translation of a subset of mRNAs involved in cell proliferation. This chain is Eukaryotic translation initiation factor 3 subunit B, found in Drosophila pseudoobscura pseudoobscura (Fruit fly).